The chain runs to 520 residues: MAAMWRRRPLSSALLSFGLLLGGLPLAAPPLAGATEEPGAGQTPGAPVVAPQQSWNSCREFIADTSEIRTARCATVSVPVDYDQPGGTQAKLAVIRVPATGQRFGALLVNPGGPGASAVDMVAAMAPAIADTDILRHFDLVGFDPRGVGHSTPALRCRTDAEFDAYRRDPMADYSPAGVTHVEQVYRQLAQDCVDRMGFSFLANIGTASVARDMDMVRQALGDDQINYLGYSYGTELGTAYLERFGTHVRAMVLDGAIDPAVSPIEESISQMAGFQTAFNDYAADCARSPACPLGTDSAQWVNRYHALVDPLVQKPGKTSDPRGLSYADATTGTINALYSPQRWKYLTSGLLGLQRGSDAGDLLVLADDYDGRDADGHYSNDQDAFNAVRCVDAPTPADPAAWVAADQRIRQVAPFLSYGQFTGSAPRDLCALWPVPATSTPHPAAPAGAGKVVVVSTTHDPATPYQSGVDLARQLGAPLITFDGTQHTAVFDGNQCVDSAVMHYFLDGTLPPTSLRCAP.

An N-terminal signal peptide occupies residues 1–34; sequence MAAMWRRRPLSSALLSFGLLLGGLPLAAPPLAGA. The chain crosses the membrane as a helical span at residues 104 to 124; it reads FGALLVNPGGPGASAVDMVAA. Positions 105–403 constitute an AB hydrolase-1 domain; sequence GALLVNPGGP…APTPADPAAW (299 aa). Catalysis depends on S232, which acts as the Nucleophile. D461 is a catalytic residue. The active-site Proton donor is the H488.

This sequence belongs to the peptidase S33 family.

It is found in the cell membrane. The polypeptide is Putative hydrolase Mb2247c (Mycobacterium bovis (strain ATCC BAA-935 / AF2122/97)).